The chain runs to 513 residues: Prostaglandin E2 receptor EP4 subtype (513 aa).

At 1 to 44 the chain is on the extracellular side; the sequence is MAEVGGTIPRSNRELQRCVLLTTTIMSIPGVNASFSSTPERLNS. N-linked (GlcNAc...) asparagine glycosylation is present at N32. Residues 45–68 form a helical membrane-spanning segment; sequence PVTIPAVMFIFGVVGNLVAIVVLC. Topologically, residues 69–80 are cytoplasmic; it reads KSRKEQKETTFY. Residues 81-104 traverse the membrane as a helical segment; the sequence is TLVCGLAVTDLLGTLLVSPVTIAT. Residues 105-121 lie on the Extracellular side of the membrane; sequence YMKGQWPGDQALCDYST. Cysteines 117 and 195 form a disulfide. The helical transmembrane segment at 122 to 140 threads the bilayer; sequence FILLFFGLSGLSIICAMSI. The Cytoplasmic segment spans residues 141 to 160; it reads ERYLAINHAYFYSHYVDKRL. The helical transmembrane segment at 161–185 threads the bilayer; the sequence is AGLTLFAIYASNVLFCALPNMGLGR. The Extracellular portion of the chain corresponds to 186–209; it reads SERQYPGTWCFIDWTTNVTAYAAF. A helical membrane pass occupies residues 210-236; it reads SYMYAGFSSFLILATVLCNVLVCGALL. Residues 237–295 lie on the Cytoplasmic side of the membrane; that stretch reads RMHRQFMRRTSLGTEQHHAAAAAAVASVACRGHAGASPALQRLSDFRRRRSFRRIAGAE. A helical membrane pass occupies residues 296-323; the sequence is IQMVILLIATSLVVLICSIPLVVRVFIN. At 324-340 the chain is on the extracellular side; sequence QLYQPNVVKDISRNPDL. Residues 341–360 traverse the membrane as a helical segment; the sequence is QAIRIASVNPILDPWIYILL. Residues 361 to 513 are Cytoplasmic-facing; it reads RKTVLSKAIE…ETLKLSEKCI (153 aa). Residues 383–403 form a disordered region; that stretch reads GRDSSAQHCSESRRTSSAMSG. The span at 384–403 shows a compositional bias: polar residues; the sequence is RDSSAQHCSESRRTSSAMSG. Residues S402, S405, and S407 each carry the phosphoserine modification.

This sequence belongs to the G-protein coupled receptor 1 family. As to quaternary structure, interacts with FEM1A. Phosphorylation mediates agonist-mediated desensitization by promoting cytoplasmic retention. As to expression, abundant expression in ileum, thymus and mastocytoma P-815 cells. Also observed in lung, spleen, heart and uterus.

Its subcellular location is the cell membrane. In terms of biological role, receptor for prostaglandin E2 (PGE2). The activity of this receptor is mediated by G(s) proteins that stimulate adenylate cyclase. Has a relaxing effect on smooth muscle. May play an important role in regulating renal hemodynamics, intestinal epithelial transport, adrenal aldosterone secretion, and uterine function. This Mus musculus (Mouse) protein is Prostaglandin E2 receptor EP4 subtype (Ptger4).